The following is a 928-amino-acid chain: MKKANDRQSPPKLLEKKRAKAPEQPTPPIQEEPEPVSNVLQGDDILALAIKKEDLTKQHIPQFEETGEKPVVTQKFIIRKLKPKDSCKRVYHLVAHPANPDATTKPLDYSGPRDSFLSSDQILPHQILGSLQDFKRIAVARGNTQLAKLINIQPCLMTLISAKEEPKPKSPKEEKRPPWAPPLQHNFLKNWRRHITLRKKQQEVLSEHLKKPASELLMNSGEGYRKIQEEREAIDRALPTQHDRKAMNCFWSPLEYLGDEKSGLLMTKKKKQRGLVEPITHIRKPFSIQMETGLPVQKDAWYRYTWDRSLFLIYRRKGLQNIMAELDFSQQDIDGLEVVGHGKPFSSVTVEEPLPLEKSQKSSSEDTVFLDSLTNLSDMVPMPILGPSLLFCGKPACWIRGSNPEDKKNIGIGVRLTFETLEGEKTSSELTVVNNGTVAIWYDWRRRPQQDFFQDLKQNRTQRFYFNNREGVILPGETKHFTFFFKSRNAGIFMESWEFGTHPTLLGGAALQITLHAISLTQDIFMDERKLLESKLAAHEAVTIAQSVLQDLLRGVSTPERAPSPVDAYLTEEDLFHYRNPRLHYQHRVVQNLHQLWQQYTEAKASQEEALNLRTPTVPLLFVEKPPDHSRTLASEYPQLQPHQEMDTLKDPKNSLLPQKTGISTKSMQRKSIMEEILVEEGPDRENTRSPRVLENLPPPKWNLCLEDFRQAVMTFPEELQREDALIQLNKAAMELCQEQKPLQSDLLYQMCLQLWRDVIDSLVSQSLWLRSLLGLPEKETVYLDIPDEGQKSPPVTEVKVTSGKLGKEDRRGGAQEKKQLSARDKEEKKGSKTPSKEDRLNSKKQKAKDDKKVVKSTSRDRLLSEDPPADSSATSQEPIDPLVMEKYTQRLYSEVYGLLDNLVIDMMVLADELGSEKNVEEPLRFCT.

Disordered regions lie at residues Met1 to Asn38 and Glu164 to Leu183. A compositionally biased stretch (basic and acidic residues) spans Glu164–Pro177. A Phosphoserine modification is found at Ser557. Thr558 is subject to Phosphothreonine. Ser564 carries the phosphoserine modification. The interval Ile786–Asp881 is disordered. Over residues Leu806–Ser865 the composition is skewed to basic and acidic residues.

In terms of assembly, interacts with MYCBP. In terms of tissue distribution, expressed in brain, retina, testis, heart and lung. Not detected in liver, kidney or intestine. In brain, highly abundant in CNS neurons of the hippocampus and cerebellum. Strongly expressed in cochlea and vestibular sensory epithelia. In both the organ of Corti and the vestibular organ, expression is restricted to hair cells.

It localises to the cytoplasm. The protein resides in the membrane. Its function is as follows. May play a role in spermatogenesis. May be involved in synaptic processes. This is MYCBP-associated protein from Rattus norvegicus (Rat).